An 89-amino-acid chain; its full sequence is Defensin-like protein 147 (89 aa).

Residues 1–24 (MKKIFQLSFTVFIIFISLVLGVVG) form the signal peptide. 4 cysteine pairs are disulfide-bonded: C34-C82, C46-C66, C51-C79, and C55-C81.

It belongs to the DEFL family. In terms of tissue distribution, expressed in flower buds, but not in stems, roots or rosette leaves.

The protein localises to the secreted. This chain is Defensin-like protein 147 (LCR1), found in Arabidopsis thaliana (Mouse-ear cress).